Reading from the N-terminus, the 273-residue chain is Inactive endochitinase At2g43600 (273 aa).

A signal peptide spans 1–22 (MTIKNVIFSLFILAILAETVFS). The Chitin-binding type-1 domain maps to 23–61 (QNCMDTSCPGLKECCSRWGFCGTKDEYCGFFCFSGPCNI). 4 cysteine pairs are disulfide-bonded: cysteine 25/cysteine 37, cysteine 30/cysteine 43, cysteine 36/cysteine 50, and cysteine 54/cysteine 59. A catalytic region spans residues 78–273 (GKIETVITSA…GVTPDQGLDC (196 aa)). Asparagine 99 carries an N-linked (GlcNAc...) asparagine glycan.

This sequence belongs to the glycosyl hydrolase 19 family. Chitinase class I subfamily.

The chain is Inactive endochitinase At2g43600 from Arabidopsis thaliana (Mouse-ear cress).